Reading from the N-terminus, the 300-residue chain is Transcription factor Sox-3 (300 aa).

Residues 1 to 35 (MYNMMETEIKSPIPQSNTGSVTGGKNNSANDQDRV) are disordered. Residues 13-30 (IPQSNTGSVTGGKNNSAN) are compositionally biased toward polar residues. A DNA-binding region (HMG box) is located at residues 35–103 (VKRPMNAFMV…MHMKEHPDYK (69 aa)). A Phosphoserine modification is found at serine 235. The 9aaTAD signature appears at 251-262 (DLRDMISMYLPP).

The protein localises to the nucleus. In terms of biological role, transcriptional activator. This is Transcription factor Sox-3 from Danio rerio (Zebrafish).